An 83-amino-acid chain; its full sequence is uncharacterized protein (83 aa).

The next 2 helical transmembrane spans lie at 23 to 43 (FSLWFTHITFIGLFLMFQLIK) and 56 to 76 (TIFVVTCIIAILLWIIYCVFL).

The protein resides in the cell membrane. This is an uncharacterized protein from Bacillus subtilis (strain 168).